An 87-amino-acid chain; its full sequence is Phosphoribosyl-ATP pyrophosphatase (87 aa).

This sequence belongs to the PRA-PH family.

The protein localises to the cytoplasm. The enzyme catalyses 1-(5-phospho-beta-D-ribosyl)-ATP + H2O = 1-(5-phospho-beta-D-ribosyl)-5'-AMP + diphosphate + H(+). It functions in the pathway amino-acid biosynthesis; L-histidine biosynthesis; L-histidine from 5-phospho-alpha-D-ribose 1-diphosphate: step 2/9. In Leifsonia xyli subsp. xyli (strain CTCB07), this protein is Phosphoribosyl-ATP pyrophosphatase.